A 262-amino-acid chain; its full sequence is Phosphate import ATP-binding protein PstB 2 (262 aa).

The region spanning 18-257 is the ABC transporter domain; the sequence is FVVRNLDLFY…PSDRRTEDYI (240 aa). Position 50-57 (50-57) interacts with ATP; it reads GPSGCGKS.

The protein belongs to the ABC transporter superfamily. Phosphate importer (TC 3.A.1.7) family. As to quaternary structure, the complex is composed of two ATP-binding proteins (PstB), two transmembrane proteins (PstC and PstA) and a solute-binding protein (PstS).

The protein localises to the cell membrane. The enzyme catalyses phosphate(out) + ATP + H2O = ADP + 2 phosphate(in) + H(+). In terms of biological role, part of the ABC transporter complex PstSACB involved in phosphate import. Responsible for energy coupling to the transport system. The protein is Phosphate import ATP-binding protein PstB 2 of Symbiobacterium thermophilum (strain DSM 24528 / JCM 14929 / IAM 14863 / T).